Consider the following 679-residue polypeptide: Methionine--tRNA ligase (679 aa).

The 'HIGH' region signature appears at 14 to 24 (PYANGSIHLGH). Zn(2+) contacts are provided by C145, C148, C158, and C161. Residues 331–335 (KMSKS) carry the 'KMSKS' region motif. K334 is a binding site for ATP. The tRNA-binding domain occupies 577 to 679 (AFAAVDLRIA…SGAKPGQRVK (103 aa)).

This sequence belongs to the class-I aminoacyl-tRNA synthetase family. MetG type 1 subfamily. As to quaternary structure, homodimer. The cofactor is Zn(2+).

It is found in the cytoplasm. The catalysed reaction is tRNA(Met) + L-methionine + ATP = L-methionyl-tRNA(Met) + AMP + diphosphate. In terms of biological role, is required not only for elongation of protein synthesis but also for the initiation of all mRNA translation through initiator tRNA(fMet) aminoacylation. This chain is Methionine--tRNA ligase, found in Pseudomonas paraeruginosa (strain DSM 24068 / PA7) (Pseudomonas aeruginosa (strain PA7)).